An 839-amino-acid chain; its full sequence is Autophagy-related protein 9A (839 aa).

The interval 1–21 is disordered; that stretch reads MAQFDTEYQRLEASYSDSPPG. At alanine 2 the chain carries N-acetylalanine. Residues 2-61 lie on the Cytoplasmic side of the membrane; that stretch reads AQFDTEYQRLEASYSDSPPGEEDLLVHVPEGSKSPWHHIENLDLFFSRVYNLHQKNGFTC. The short motif at 8 to 11 is the Tyrosine-based sorting signal element; it reads YQRL. Serine 14, serine 16, and serine 18 each carry phosphoserine. Residues 62 to 84 form a helical membrane-spanning segment; it reads MLIGEIFELMQFLFVVAFTTFLV. Residues 85-128 are Lumenal-facing; that stretch reads SCVDYDILFANKMVNHSLHPTEPVKVTLPDAFLPAQVCSARIQE. The N-linked (GlcNAc...) asparagine glycan is linked to asparagine 99. A helical membrane pass occupies residues 129–154; sequence NGSLITILVIAGVFWVHRLIKFIYNI. The Cytoplasmic portion of the chain corresponds to 155–290; sequence CCYWEIHSFY…ELAQRLSNRI (136 aa). The stretch at 291–301 is an intramembrane region; the sequence is LWIGIANFLLC. The Cytoplasmic segment spans residues 302–319; the sequence is PLILIWQILYAFFSYAEV. An intramembrane segment occupies 320–328; sequence LKREPGALG. Residues 329-371 are Cytoplasmic-facing; it reads ARCWSLYGRCYLRHFNELEHELQSRLNRGYKPASKYMNCFLSP. Residues 372 to 397 traverse the membrane as a helical segment; that stretch reads LLTLLAKNCAFFAGSILAVLIALTIY. Residues 398–406 lie on the Lumenal side of the membrane; the sequence is DEDVLAVEH. Residues 407–424 form a helical membrane-spanning segment; sequence VLTTVTLLGVTVTVCRSF. Topologically, residues 425 to 470 are cytoplasmic; the sequence is IPDQHMVFCPEQLLRVILAHIHYMPDHWQGNAHRSQTRDEFAQLFQ. The stretch at 471 to 480 is an intramembrane region; the sequence is YKAVFILEEL. Residues 481–483 lie on the Cytoplasmic side of the membrane; it reads LSP. Residues 484–492 lie within the membrane without spanning it; that stretch reads IVTPLILIF. Residues 493–839 are Cytoplasmic-facing; it reads CLRPRALEII…DELPPQVHKV (347 aa). Phosphoserine is present on residues serine 656, serine 735, serine 738, serine 741, and serine 828. Disordered regions lie at residues 656-688 and 719-839; these read SPLQPGQAPTGRAPSTMTGSGVDARTASSGSSV and QQAQ…VHKV. The span at 724-736 shows a compositional bias: basic and acidic residues; that stretch reads EPERHVWHRRESD. Acidic residues-rich tracts occupy residues 737-747 and 823-832; these read ESGESAPEEGG and VPEEGSEDEL.

It belongs to the ATG9 family. In terms of assembly, homotrimer; forms a homotrimer with a central pore that forms a path between the two membrane leaflets. Interacts (via cytoplasmic its C-terminus) with ATG2A. Interacts with SUPT20H. Interacts (via the tyrosine-based sorting signal motif) with AP4M1; promoting association with the AP-4 complex. Interacts with ARFIP1 and ARFIP2. Interacts with PI4K2A and PI4KB. Interacts with ATG4A; the interaction is direct and promotes ATG9A trafficking. Post-translationally, ufmylated in a DDRGK1 dependent manner.

The protein resides in the preautophagosomal structure membrane. It is found in the cytoplasmic vesicle. It localises to the autophagosome membrane. Its subcellular location is the golgi apparatus. The protein localises to the trans-Golgi network membrane. The protein resides in the late endosome membrane. It is found in the recycling endosome membrane. It localises to the endoplasmic reticulum membrane. Its subcellular location is the mitochondrion membrane. It carries out the reaction a 1,2-diacyl-sn-glycero-3-phosphocholine(in) = a 1,2-diacyl-sn-glycero-3-phosphocholine(out). It catalyses the reaction a 1,2-diacyl-sn-glycero-3-phospho-L-serine(in) = a 1,2-diacyl-sn-glycero-3-phospho-L-serine(out). The enzyme catalyses a 1,2-diacyl-sn-glycero-3-phosphoethanolamine(in) = a 1,2-diacyl-sn-glycero-3-phosphoethanolamine(out). In terms of biological role, phospholipid scramblase involved in autophagy by mediating autophagosomal membrane expansion. Cycles between the preautophagosomal structure/phagophore assembly site (PAS) and the cytoplasmic vesicle pool and supplies membrane for the growing autophagosome. Lipid scramblase activity plays a key role in preautophagosomal structure/phagophore assembly by distributing the phospholipids that arrive through ATG2 (ATG2A or ATG2B) from the cytoplasmic to the luminal leaflet of the bilayer, thereby driving autophagosomal membrane expansion. Also required to supply phosphatidylinositol 4-phosphate to the autophagosome initiation site by recruiting the phosphatidylinositol 4-kinase beta (PI4KB) in a process dependent on ARFIP2, but not ARFIP1. In addition to autophagy, also plays a role in necrotic cell death. The sequence is that of Autophagy-related protein 9A from Bos taurus (Bovine).